The following is a 2355-amino-acid chain: Acetyl-CoA carboxylase 2 (2355 aa).

In terms of domain architecture, Biotin carboxylation spans 138 to 645 (PIHSILVATN…HTGWLDSRIA (508 aa)). Residues 291 to 485 (GRSLVTVPEE…AAQVAVGMGI (195 aa)) enclose the ATP-grasp domain. 317–374 (CQVVGYPAMIKASWGGGGKGIRKVHNDDEVRALFKQVQGEVPGSPIFIMKVASQSRHL) serves as a coordination point for ATP. The Mg(2+) site is built by glutamate 440, glutamate 454, and asparagine 456. Mn(2+) contacts are provided by glutamate 440, glutamate 454, and asparagine 456. Arginine 458 is an active-site residue. The 75-residue stretch at 772–846 (LQNDHDPSKL…QAGELIAKLD (75 aa)) folds into the Biotinyl-binding domain. Residue lysine 813 is modified to N6-biotinyllysine. Threonine 1133 carries the post-translational modification Phosphothreonine. Phosphoserine is present on serine 1293. The CoA carboxyltransferase N-terminal domain occupies 1593–1932 (QYKPLNNLDR…YVGGPLPVLA (340 aa)). Residues 1593–2251 (QYKPLNNLDR…ESSLVRNIRK (659 aa)) form a carboxyltransferase region. Arginine 1841, lysine 2142, and arginine 2144 together coordinate CoA. The 316-residue stretch at 1936-2251 (PPERTVEYIP…ESSLVRNIRK (316 aa)) folds into the CoA carboxyltransferase C-terminal domain.

In terms of assembly, homodimer. Requires biotin as cofactor. The cofactor is Mg(2+). Mn(2+) is required as a cofactor. As to expression, widely expressed at low levels.

Its subcellular location is the cytoplasm. It is found in the cytosol. The enzyme catalyses hydrogencarbonate + acetyl-CoA + ATP = malonyl-CoA + ADP + phosphate + H(+). It catalyses the reaction N(6)-biotinyl-L-lysyl-[protein] + hydrogencarbonate + ATP = N(6)-carboxybiotinyl-L-lysyl-[protein] + ADP + phosphate + H(+). The protein operates within lipid metabolism; malonyl-CoA biosynthesis; malonyl-CoA from acetyl-CoA: step 1/1. Functionally, multifunctional enzyme that catalyzes the carboxylation of acetyl-CoA, forming malonyl-CoA, which is used in the plastid for fatty acid synthesis and in the cytosol in various biosynthetic pathways including fatty acid elongation. The polypeptide is Acetyl-CoA carboxylase 2 (ACC2) (Arabidopsis thaliana (Mouse-ear cress)).